The chain runs to 363 residues: Capsid protein (363 aa).

The stretch at 72 to 111 (KKVEELNESLKAAILAGAEAEDLRNKLKDISQRYASQLEI) forms a coiled coil. Residues 122–144 (LKKKGHEQPLTGSGSSEPVHAES) are disordered.

It localises to the virion. This is Capsid protein from Citrus leaf blotch virus (isolate Nagami kumquat/France/SRA-153/1984) (CLBV).